The primary structure comprises 117 residues: Large ribosomal subunit protein bL20c (117 aa).

The protein belongs to the bacterial ribosomal protein bL20 family.

The protein localises to the plastid. It localises to the chloroplast. In terms of biological role, binds directly to 23S ribosomal RNA and is necessary for the in vitro assembly process of the 50S ribosomal subunit. It is not involved in the protein synthesizing functions of that subunit. This is Large ribosomal subunit protein bL20c from Buxus microphylla (Littleleaf boxwood).